The sequence spans 605 residues: Translation factor GUF1 homolog, chloroplastic (605 aa).

Residues 7 to 189 (RRIRNFSIIA…RIVQVVPPPR (183 aa)) form the tr-type G domain. Residues 16–23 (AHIDHGKS), 82–86 (DTPGH), and 136–139 (NKID) contribute to the GTP site.

This sequence belongs to the TRAFAC class translation factor GTPase superfamily. Classic translation factor GTPase family. LepA subfamily.

Its subcellular location is the plastid. The protein localises to the chloroplast. It carries out the reaction GTP + H2O = GDP + phosphate + H(+). In terms of biological role, promotes chloroplast protein synthesis. May act as a fidelity factor of the translation reaction, by catalyzing a one-codon backward translocation of tRNAs on improperly translocated ribosomes. In Ostreococcus lucimarinus (strain CCE9901), this protein is Translation factor GUF1 homolog, chloroplastic.